Consider the following 425-residue polypeptide: MRSILVLVALIGCIAAGVYKIPLKRITPPMIKMLRAGTWETYVEGMRKRQLQLLKEHKVHIQDVLGYANMEYLGEITIGTPQQKFLVVLDTGSSNLWVPDDSCYKEKRPDRCLVSNCDAGLVCQVFCPDPKCCEHTREFKQVNACKDKHRFDQKNSNTYVKTNKTWAIAYGTGDARGFFGRDTVRLGAEGKDQLVINDTWFGQAEHIAEFFSNTFLDGILGLAFQELSEGGVAPPIIRAIDLGLLDQPIFTVYFENVGDKEGVYGGVFTWGGLDPDHCEDEVTYEQLTEATYWQFRLKGVSSKNFSSTAGWEAISDTGTSLNGAPRGILRSIARQYNGQYVASQGLYVVDCSKNVTVDVTIGDRNYTMTAKNLVLEIQADICIMAFFEMDMFIGPAWILGDPFIREYCNIHDIEKKRIGFAAVKH.

An N-terminal signal peptide occupies residues methionine 1–alanine 16. Residues tyrosine 72–alanine 421 form the Peptidase A1 domain. Aspartate 90 is an active-site residue. An intrachain disulfide couples cysteine 103 to cysteine 145. N-linked (GlcNAc...) asparagine glycans are attached at residues asparagine 163, asparagine 197, and asparagine 304. Aspartate 316 is an active-site residue. An intrachain disulfide couples cysteine 351 to cysteine 382. N-linked (GlcNAc...) asparagine glycosylation is found at asparagine 354 and asparagine 365.

The protein belongs to the peptidase A1 family. In terms of processing, cleaved into a mature form. In terms of tissue distribution, expressed in intestine, amphidal glands and excretory gland (at protein level).

The protein localises to the secreted. Inhibited by pepstatin A. In terms of biological role, aspartic protease which cleaves several human serum proteins including hemoglobin, fibrinogen and albumin. Appears to cleave preferentially between P1 (Ala, Leu, Val, Phe and Gly) and P1' (Ala and Leu) residues. In Necator americanus (Human hookworm), this protein is Aspartic protease 2.